The primary structure comprises 90 residues: Large ribosomal subunit protein bL31 (90 aa).

Residues 71 to 90 (KVKKFPSNADNQKEPAEEQE) are disordered. Basic and acidic residues predominate over residues 81–90 (NQKEPAEEQE).

It belongs to the bacterial ribosomal protein bL31 family. Type A subfamily. As to quaternary structure, part of the 50S ribosomal subunit.

Functionally, binds the 23S rRNA. The chain is Large ribosomal subunit protein bL31 (rpmE) from Aster yellows witches'-broom phytoplasma (strain AYWB).